Consider the following 768-residue polypeptide: Translation factor GUF1 homolog, mitochondrial (768 aa).

The transit peptide at 1 to 29 (MRLWNRFSRLGNLLCACAACGCSFTPWRC) directs the protein to the mitochondrion. Residues 110–293 (SNIRNVAVVA…AIIERVPSPS (184 aa)) enclose the tr-type G domain. GTP is bound by residues 119–126 (AHVDHGKT), 184–188 (DTPGH), and 238–241 (TKMD).

The protein belongs to the TRAFAC class translation factor GTPase superfamily. Classic translation factor GTPase family. LepA subfamily.

The protein resides in the mitochondrion inner membrane. It carries out the reaction GTP + H2O = GDP + phosphate + H(+). Its function is as follows. Promotes mitochondrial protein synthesis. May act as a fidelity factor of the translation reaction, by catalyzing a one-codon backward translocation of tRNAs on improperly translocated ribosomes. Binds to mitochondrial ribosomes in a GTP-dependent manner. This Trypanosoma brucei brucei (strain 927/4 GUTat10.1) protein is Translation factor GUF1 homolog, mitochondrial.